The following is a 251-amino-acid chain: SPbeta prophage-derived putative antirepressor protein YoqD (251 aa).

This is SPbeta prophage-derived putative antirepressor protein YoqD (yoqD) from Bacillus subtilis (strain 168).